Reading from the N-terminus, the 644-residue chain is Protein SNOWY COTYLEDON 3 (644 aa).

Disordered stretches follow at residues 1–129 (MVAA…TRTE), 162–252 (ETAT…DGRL), and 290–414 (SDTD…SRVR). A compositionally biased stretch (low complexity) spans 53-77 (SPSPSHSTTTTTTTATSTSTSSSSS). Polar residues predominate over residues 91 to 112 (LSRTTNSASNLVYTPSSLPKRS). Over residues 172–190 (CTPERRRATPVRDQRENSK) the composition is skewed to basic and acidic residues. Polar residues-rich tracts occupy residues 290–302 (SDTD…STNG) and 314–332 (TRSL…QETN). Low complexity-rich tracts occupy residues 343–370 (SPQC…SSDS) and 397–412 (ATAT…SPSR). The QWRF motif motif lies at 463 to 466 (QWRF).

This sequence belongs to the QWRF family. In terms of tissue distribution, expressed in young developing tissues, such as seedlings, roots, flowers, buds and young siliques, and to a lesser extent in mature green tissues.

The protein localises to the peroxisome. Its function is as follows. Probable microtubule-associated peroxisomal protein required for chloroplast biogenesis and for the formation of the prolamellar body and prothylakoids in etioplasts. Not involved in peroxisomal metabolism, including mobilization of storage compounds during germination, fatty acid beta-oxydation or photorespiration. The polypeptide is Protein SNOWY COTYLEDON 3 (SCO3) (Arabidopsis thaliana (Mouse-ear cress)).